The chain runs to 219 residues: MSRISKEEMSKLLSVYFIMGSNNCTKDPLQVLREALEGGITIFQFREKGEGALTGEERICFAKELQAICKEYGVPFIVNDDVELALELDADGVHVGQDDEGITSVREKMGDKIVGVSTHTIEEARWAIENGADYLGVGPIFPTSTKKDTKAVQGTKGLAHFREQGITIPIVGIGGISIENTASVIEAGADGVSVISAISLAESSYESTKKLVEEVSRSL.

4-amino-2-methyl-5-(diphosphooxymethyl)pyrimidine is bound by residues 44 to 48 and N79; that span reads QFREK. D80 and D99 together coordinate Mg(2+). Position 117 (S117) interacts with 4-amino-2-methyl-5-(diphosphooxymethyl)pyrimidine. 143-145 lines the 2-[(2R,5Z)-2-carboxy-4-methylthiazol-5(2H)-ylidene]ethyl phosphate pocket; the sequence is TST. K146 contacts 4-amino-2-methyl-5-(diphosphooxymethyl)pyrimidine. Residues G175 and 195 to 196 each bind 2-[(2R,5Z)-2-carboxy-4-methylthiazol-5(2H)-ylidene]ethyl phosphate; that span reads IS.

The protein belongs to the thiamine-phosphate synthase family. Mg(2+) is required as a cofactor.

It catalyses the reaction 2-[(2R,5Z)-2-carboxy-4-methylthiazol-5(2H)-ylidene]ethyl phosphate + 4-amino-2-methyl-5-(diphosphooxymethyl)pyrimidine + 2 H(+) = thiamine phosphate + CO2 + diphosphate. The enzyme catalyses 2-(2-carboxy-4-methylthiazol-5-yl)ethyl phosphate + 4-amino-2-methyl-5-(diphosphooxymethyl)pyrimidine + 2 H(+) = thiamine phosphate + CO2 + diphosphate. It carries out the reaction 4-methyl-5-(2-phosphooxyethyl)-thiazole + 4-amino-2-methyl-5-(diphosphooxymethyl)pyrimidine + H(+) = thiamine phosphate + diphosphate. Its pathway is cofactor biosynthesis; thiamine diphosphate biosynthesis; thiamine phosphate from 4-amino-2-methyl-5-diphosphomethylpyrimidine and 4-methyl-5-(2-phosphoethyl)-thiazole: step 1/1. Functionally, condenses 4-methyl-5-(beta-hydroxyethyl)thiazole monophosphate (THZ-P) and 2-methyl-4-amino-5-hydroxymethyl pyrimidine pyrophosphate (HMP-PP) to form thiamine monophosphate (TMP). This chain is Thiamine-phosphate synthase, found in Bacillus cereus (strain 03BB102).